The sequence spans 532 residues: Fatty-acid amide hydrolase 2 (532 aa).

A helical transmembrane segment spans residues 11-31; it reads LFLLRALGFLIGLVGRAALVL. Residues Lys-131 and Ser-206 each act as charge relay system in the active site. Residue Ser-230 is the Acyl-ester intermediate of the active site.

This sequence belongs to the amidase family. As to quaternary structure, homodimer. In terms of tissue distribution, expressed in kidney, liver, lung, prostate, heart and ovary.

The protein resides in the membrane. It localises to the lipid droplet. The enzyme catalyses N-(5Z,8Z,11Z,14Z-eicosatetraenoyl)-ethanolamine + H2O = ethanolamine + (5Z,8Z,11Z,14Z)-eicosatetraenoate. It carries out the reaction (9Z)-octadecenamide + H2O = (9Z)-octadecenoate + NH4(+). It catalyses the reaction N-(9Z-octadecenoyl) ethanolamine + H2O = ethanolamine + (9Z)-octadecenoate. The catalysed reaction is N-hexadecanoylethanolamine + H2O = ethanolamine + hexadecanoate. With respect to regulation, inhibited by O-aryl carbamates and alpha-keto heterocytes. Its function is as follows. Catalyzes the hydrolysis of endogenous amidated lipids like the sleep-inducing lipid oleamide ((9Z)-octadecenamide), the endocannabinoid anandamide (N-(5Z,8Z,11Z,14Z-eicosatetraenoyl)-ethanolamine), as well as other fatty amides, to their corresponding fatty acids, thereby regulating the signaling functions of these molecules. Hydrolyzes monounsaturated substrate anandamide preferentially as compared to polyunsaturated substrates. In Homo sapiens (Human), this protein is Fatty-acid amide hydrolase 2 (FAAH2).